The chain runs to 38 residues: Large ribosomal subunit protein bL36 (38 aa).

It belongs to the bacterial ribosomal protein bL36 family.

In Chlorobium phaeobacteroides (strain BS1), this protein is Large ribosomal subunit protein bL36.